A 3164-amino-acid chain; its full sequence is ORFB polyprotein (3164 aa).

Positions 271-418 (MARAIGLSHA…IWNDPNILVG (148 aa)) constitute a Peptidase C8 domain. Catalysis depends on for papain-like protease p48 activity residues Cys-341 and His-388. A run of 6 helical transmembrane segments spans residues 684 to 704 (LGFL…LLPF), 791 to 811 (IMIA…YVPY), 823 to 843 (YMLL…GYAC), 1166 to 1186 (AGLF…AAIM), 1215 to 1235 (FPIF…VSAY), and 1356 to 1376 (ALGF…LRPP). The tract at residues 1419 to 1445 (IEEKPSDAGRSEPIPDNDKQEESDYDQ) is disordered. An RNA-directed RNA polymerase region spans residues 1792 to 2207 (FYKSRKALKQ…AEDSADYRTW (416 aa)). The next 3 helical transmembrane spans lie at 2494–2514 (VRIY…MHWV), 2516–2536 (LFVQ…WSFW), and 2589–2609 (LGLV…EVLF). In terms of domain architecture, Helicase ATP-binding spans 2650 to 2795 (ATKAIEHGHV…IPFLEPTLPK (146 aa)). 2663–2670 (AKTASGKS) contributes to the ATP binding site. The short motif at 2750–2753 (DEFH) is the DEFH box element.

This sequence in the C-terminal section; belongs to the DEAD box helicase family. In terms of processing, papain-like protease p48 is autocatalytically processed. The putative RNA-directed RNA polymerase/helicase is probably further processed.

The protein localises to the host membrane. The enzyme catalyses RNA(n) + a ribonucleoside 5'-triphosphate = RNA(n+1) + diphosphate. It carries out the reaction ATP + H2O = ADP + phosphate + H(+). Papain-like protease p48 is a cysteine protease of the peptidase family C8. The sequence is that of ORFB polyprotein from Cryphonectria parasitica (Chestnut blight fungus).